Consider the following 361-residue polypeptide: UDP-3-O-acylglucosamine N-acyltransferase (361 aa).

The active-site Proton acceptor is His253.

This sequence belongs to the transferase hexapeptide repeat family. LpxD subfamily. As to quaternary structure, homotrimer.

The catalysed reaction is a UDP-3-O-[(3R)-3-hydroxyacyl]-alpha-D-glucosamine + a (3R)-hydroxyacyl-[ACP] = a UDP-2-N,3-O-bis[(3R)-3-hydroxyacyl]-alpha-D-glucosamine + holo-[ACP] + H(+). It functions in the pathway bacterial outer membrane biogenesis; LPS lipid A biosynthesis. Functionally, catalyzes the N-acylation of UDP-3-O-acylglucosamine using 3-hydroxyacyl-ACP as the acyl donor. Is involved in the biosynthesis of lipid A, a phosphorylated glycolipid that anchors the lipopolysaccharide to the outer membrane of the cell. This chain is UDP-3-O-acylglucosamine N-acyltransferase, found in Burkholderia thailandensis (strain ATCC 700388 / DSM 13276 / CCUG 48851 / CIP 106301 / E264).